The chain runs to 826 residues: Lethal(3)malignant brain tumor-like protein 1 (826 aa).

Phosphoserine is present on Ser-136. 2 disordered regions span residues 167–197 and 220–271; these read LEPP…SGDR and LLKP…RSQL. Over residues 242 to 256 the composition is skewed to basic and acidic residues; that stretch reads EAVKQGEGKDAEREP. MBT repeat units lie at residues 280-380, 388-487, and 496-591; these read WSWE…LQLP, FSWS…LTPP, and FCWE…LEPP. The segment at 453-460 is interaction with monomethylated and dimethylated peptides; it reads FDDWGDTY. Residues 586-621 are disordered; the sequence is HPLEPPLRPRESSSVSPGGCPPLSHRSPPHTKTSKY. Residues 612–621 show a composition bias toward basic residues; the sequence is SPPHTKTSKY. The CCHHC-type zinc finger occupies 619–662; sequence SKYNFHHRKCPTPGCDGSGHVTGKFTAHHCLSGCPLAEKNQSRL. Residues Cys-628, Cys-633, His-646, and Cys-652 each coordinate Zn(2+). The interval 663 to 699 is disordered; sequence KAELSDSETAARKKNPSNLSPRKKPRHQGRIGRPPKY. The segment covering 683–699 has biased composition (basic residues); it reads PRKKPRHQGRIGRPPKY. The SAM domain occupies 757–821; it reads WTIEEVFGFV…YNAILMFKNT (65 aa).

As to quaternary structure, homodimer. Interacts with RB1/RB (when monomethylated at 'Lys-860'). Interacts with p53/TP53 (when monomethylated at 'Lys-382'). Interacts with CBX3, ETV6, KMT5A and VCP/p97. Ubiquitinated in a VCP/p97-dependent way following DNA damage, leading to its removal from DNA damage sites, promoting accessibility of H4K20me2 mark for DNA repair protein TP53BP1, which is then recruited to DNA damage sites. As to expression, highly expressed in brain, testis, eyes, and ES cells.

It is found in the nucleus. Polycomb group (PcG) protein that specifically recognizes and binds mono- and dimethyllysine residues on target proteins, thereby acting as a 'reader' of a network of post-translational modifications. PcG proteins maintain the transcriptionally repressive state of genes: acts as a chromatin compaction factor by recognizing and binding mono- and dimethylated histone H1b/H1-4 at 'Lys-26' (H1bK26me1 and H1bK26me2) and histone H4 at 'Lys-20' (H4K20me1 and H4K20me2), leading to condense chromatin and repress transcription. Recognizes and binds p53/TP53 monomethylated at 'Lys-382', leading to repress p53/TP53-target genes. Also recognizes and binds RB1/RB monomethylated at 'Lys-860'. Participates in the ETV6-mediated repression. Probably plays a role in cell proliferation. Overexpression induces multinucleated cells, suggesting that it is required to accomplish normal mitosis. This is Lethal(3)malignant brain tumor-like protein 1 (L3mbtl1) from Mus musculus (Mouse).